The chain runs to 277 residues: Caspase-3 (277 aa).

M1 bears the N-acetylmethionine mark. 2 consecutive propeptides follow at residues 1-9 and 10-28; these read MENSENSVD and AKSI…KSMD. The residue at position 11 (K11) is an N6-acetyllysine. S26 carries the phosphoserine modification. Residues H121 and C163 contribute to the active site. S-nitrosocysteine; in inhibited form is present on C163.

It belongs to the peptidase C14A family. As to quaternary structure, heterotetramer that consists of two anti-parallel arranged heterodimers, each one formed by a 17 kDa (p17) and a 12 kDa (p12) subunit. Interacts with BIRC6/bruce. Cleavage by granzyme B, caspase-6, caspase-8 and caspase-10 generates the two active subunits. Additional processing of the propeptides is likely due to the autocatalytic activity of the activated protease. Active heterodimers between the small subunit of caspase-7 protease and the large subunit of caspase-3 also occur and vice versa. In terms of processing, S-nitrosylated on its catalytic site cysteine in unstimulated cell lines and denitrosylated upon activation of the Fas apoptotic pathway, associated with an increase in intracellular caspase activity. Fas therefore activates caspase-3 not only by inducing the cleavage of the caspase zymogen to its active subunits, but also by stimulating the denitrosylation of its active site thiol. Post-translationally, ubiquitinated by BIRC6; this activity is inhibited by DIABLO/SMAC.

The protein resides in the cytoplasm. The catalysed reaction is Strict requirement for an Asp residue at positions P1 and P4. It has a preferred cleavage sequence of Asp-Xaa-Xaa-Asp-|- with a hydrophobic amino-acid residue at P2 and a hydrophilic amino-acid residue at P3, although Val or Ala are also accepted at this position.. Inhibited by BIRC6; following inhibition of BIRC6-caspase binding by DIABLO/SMAC, BIRC6 is subjected to caspase cleavage, leading to an increase in active caspases. Its function is as follows. Involved in the activation cascade of caspases responsible for apoptosis execution. At the onset of apoptosis, it proteolytically cleaves poly(ADP-ribose) polymerase PARP1 at a '216-Asp-|-Gly-217' bond. Cleaves and activates sterol regulatory element binding proteins (SREBPs) between the basic helix-loop-helix leucine zipper domain and the membrane attachment domain. Cleaves and activates caspase-6, -7 and -9 (CASP6, CASP7 and CASP9, respectively). Cleaves and inactivates interleukin-18 (IL18). Triggers cell adhesion in sympathetic neurons through RET cleavage. Cleaves IL-1 beta between an Asp and an Ala, releasing the mature cytokine which is involved in a variety of inflammatory processes. Cleaves and inhibits serine/threonine-protein kinase AKT1 in response to oxidative stress. Acts as an inhibitor of type I interferon production during virus-induced apoptosis by mediating cleavage of antiviral proteins CGAS, IRF3 and MAVS, thereby preventing cytokine overproduction. Also involved in pyroptosis by mediating cleavage and activation of gasdermin-E (GSDME). Cleaves XRCC4 and phospholipid scramblase proteins XKR4, XKR8 and XKR9, leading to promote phosphatidylserine exposure on apoptotic cell surface. Cleaves BIRC6 following inhibition of BIRC6-caspase binding by DIABLO/SMAC. This Felis catus (Cat) protein is Caspase-3 (CASP3).